The primary structure comprises 82 residues: Putative Fe(2+) transport protein A (82 aa).

This sequence belongs to the FeoA family.

Might be involved in Fe(2+) ion uptake. In Leptolyngbya boryana (Plectonema boryanum), this protein is Putative Fe(2+) transport protein A.